Reading from the N-terminus, the 110-residue chain is Parvalbumin alpha (110 aa).

Serine 2 carries the post-translational modification N-acetylserine. 3 positions are modified to phosphoserine: serine 2, serine 8, and serine 24. EF-hand domains lie at 39-74 and 78-110; these read KNPDEVKKVFHILDKDKSGFIEEDELGSILKGFSSD and LSAKETKTLLAAGDKDGDGKIGVEEFSTLVAES. Ca(2+)-binding residues include aspartate 52, aspartate 54, serine 56, phenylalanine 58, glutamate 60, glutamate 63, aspartate 91, aspartate 93, aspartate 95, lysine 97, and glutamate 102.

Expressed in the modiolar nerve root (at protein level).

Functionally, in muscle, parvalbumin is thought to be involved in relaxation after contraction. It binds two calcium ions. The protein is Parvalbumin alpha (Pvalb) of Mus musculus (Mouse).